The sequence spans 57 residues: uncharacterized protein (57 aa).

The chain crosses the membrane as a helical span at residues G21–S37.

It is found in the host membrane. This is an uncharacterized protein from Human herpesvirus 6B (strain Z29) (HHV-6 variant B).